The following is a 105-amino-acid chain: Nitrogen fixation nifHD region GlnB-like protein 1 (105 aa).

Belongs to the P(II) protein family.

Could be involved in the regulation of nitrogen fixation. This is Nitrogen fixation nifHD region GlnB-like protein 1 (glnBA) from Methanothermococcus thermolithotrophicus (Methanococcus thermolithotrophicus).